Here is a 313-residue protein sequence, read N- to C-terminus: Protein FixB (313 aa).

255–283 lines the FAD pocket; sequence LYLAVGISGQIQHMVGANASQTIFAINKD.

The protein belongs to the ETF alpha-subunit/FixB family. Heterodimer of FixA and FixB.

Its pathway is amine and polyamine metabolism; carnitine metabolism. Functionally, required for anaerobic carnitine reduction. May bring reductant to CaiA. The polypeptide is Protein FixB (Escherichia coli O1:K1 / APEC).